We begin with the raw amino-acid sequence, 134 residues long: Small ribosomal subunit protein bS6 (134 aa).

Belongs to the bacterial ribosomal protein bS6 family.

In terms of biological role, binds together with bS18 to 16S ribosomal RNA. The chain is Small ribosomal subunit protein bS6 from Chlorobium phaeobacteroides (strain BS1).